Consider the following 123-residue polypeptide: Fluoride-specific ion channel FluC (123 aa).

A run of 4 helical transmembrane segments spans residues Met-1–Ala-21, Leu-32–Phe-52, Phe-66–Phe-86, and Gly-99–Phe-119. Residues Gly-73 and Thr-76 each coordinate Na(+).

Belongs to the fluoride channel Fluc/FEX (TC 1.A.43) family.

It localises to the cell inner membrane. It catalyses the reaction fluoride(in) = fluoride(out). Na(+) is not transported, but it plays an essential structural role and its presence is essential for fluoride channel function. Functionally, fluoride-specific ion channel. Important for reducing fluoride concentration in the cell, thus reducing its toxicity. The chain is Fluoride-specific ion channel FluC from Psychrobacter cryohalolentis (strain ATCC BAA-1226 / DSM 17306 / VKM B-2378 / K5).